Consider the following 382-residue polypeptide: MRRNVALLFGGRSAEHEVSIVSAGNVARALDPDRYAVTPIAIDKETGAWRLCPPLAPGEAPAMVREGPRVAFLPGGGGRLAVLGETASVSEPFDVVVPVLHGPNGEDGTVQGALDLAGVPYVGSGVIGSAAAMDKDVAKRLMRDAGLPIVPYLVAGPRRGVAYTEAVEALESRTLFVKPANMGSSVGVSRVADAGQFDQALAHAFAYDEKILIERAVPRAREIEFAVLETAEGEVRVSPPGEIAPAAAHGFYGYDAKYVDPDGAALLIPASLAPALAERMGGLAARAFEALACAGLARVDLFLDPDDPEGIFVNEVNTLPGFTAISMYPKLWDAAGLAPPALMDALIAHALARHARAVATGRAAPRSAADAAWAPMRESISR.

The ATP-grasp domain maps to 139–348 (KRLMRDAGLP…PPALMDALIA (210 aa)). Residue 168–223 (EALESRTLFVKPANMGSSVGVSRVADAGQFDQALAHAFAYDEKILIERAVPRAREI) coordinates ATP. Mg(2+) is bound by residues aspartate 300, glutamate 315, and asparagine 317.

The protein belongs to the D-alanine--D-alanine ligase family. Requires Mg(2+) as cofactor. It depends on Mn(2+) as a cofactor.

It localises to the cytoplasm. It catalyses the reaction 2 D-alanine + ATP = D-alanyl-D-alanine + ADP + phosphate + H(+). It functions in the pathway cell wall biogenesis; peptidoglycan biosynthesis. Cell wall formation. This is D-alanine--D-alanine ligase from Methylobacterium sp. (strain 4-46).